The primary structure comprises 93 residues: MPRSLKKGPFVDGHLQKKVDDQNTKGTKNVIKTWSRRSLITPDFLGHTFAVHDGRKHVPVFVTEAMVGHKLGEFAPTRTYRGHDKDDRKARRR.

Disordered regions lie at residues 1–25 (MPRSLKKGPFVDGHLQKKVDDQNTK) and 74–93 (FAPTRTYRGHDKDDRKARRR). Basic and acidic residues-rich tracts occupy residues 14–23 (HLQKKVDDQN) and 81–93 (RGHDKDDRKARRR).

This sequence belongs to the universal ribosomal protein uS19 family.

In terms of biological role, protein S19 forms a complex with S13 that binds strongly to the 16S ribosomal RNA. The sequence is that of Small ribosomal subunit protein uS19 from Beutenbergia cavernae (strain ATCC BAA-8 / DSM 12333 / CCUG 43141 / JCM 11478 / NBRC 16432 / NCIMB 13614 / HKI 0122).